A 323-amino-acid polypeptide reads, in one-letter code: Ferrochelatase (323 aa).

Fe cation contacts are provided by histidine 196 and glutamate 277.

It belongs to the ferrochelatase family.

The protein resides in the cytoplasm. The enzyme catalyses heme b + 2 H(+) = protoporphyrin IX + Fe(2+). It participates in porphyrin-containing compound metabolism; protoheme biosynthesis; protoheme from protoporphyrin-IX: step 1/1. Catalyzes the ferrous insertion into protoporphyrin IX. The polypeptide is Ferrochelatase (Haemophilus influenzae (strain 86-028NP)).